We begin with the raw amino-acid sequence, 38 residues long: Photosystem I reaction center subunit IX (38 aa).

A helical membrane pass occupies residues 4–24 (FLTTAPVFSAIWFTLTAGIMI).

Belongs to the PsaJ family.

It is found in the plastid. The protein localises to the organellar chromatophore thylakoid membrane. May help in the organization of the PsaE and PsaF subunits. The protein is Photosystem I reaction center subunit IX of Paulinella chromatophora.